We begin with the raw amino-acid sequence, 123 residues long: ATP synthase epsilon chain (123 aa).

This sequence belongs to the ATPase epsilon chain family. As to quaternary structure, F-type ATPases have 2 components, CF(1) - the catalytic core - and CF(0) - the membrane proton channel. CF(1) has five subunits: alpha(3), beta(3), gamma(1), delta(1), epsilon(1). CF(0) has three main subunits: a, b and c.

Its subcellular location is the cell inner membrane. Produces ATP from ADP in the presence of a proton gradient across the membrane. In Helicobacter acinonychis (strain Sheeba), this protein is ATP synthase epsilon chain.